The sequence spans 278 residues: Phosphatidylglycerol--prolipoprotein diacylglyceryl transferase (278 aa).

Helical transmembrane passes span 17 to 37 (LAVR…ILLG), 57 to 77 (ALFY…VLFY), 89 to 109 (ILAI…VAIA), and 119 to 139 (LSWL…LGAG). Position 140 (Arg-140) interacts with a 1,2-diacyl-sn-glycero-3-phospho-(1'-sn-glycerol). 3 consecutive transmembrane segments (helical) span residues 174–194 (QLYE…LYSA), 200–220 (GAVT…CEFF), and 233–253 (LGIS…IALL).

This sequence belongs to the Lgt family.

The protein resides in the cell inner membrane. It carries out the reaction L-cysteinyl-[prolipoprotein] + a 1,2-diacyl-sn-glycero-3-phospho-(1'-sn-glycerol) = an S-1,2-diacyl-sn-glyceryl-L-cysteinyl-[prolipoprotein] + sn-glycerol 1-phosphate + H(+). Its pathway is protein modification; lipoprotein biosynthesis (diacylglyceryl transfer). Its function is as follows. Catalyzes the transfer of the diacylglyceryl group from phosphatidylglycerol to the sulfhydryl group of the N-terminal cysteine of a prolipoprotein, the first step in the formation of mature lipoproteins. The chain is Phosphatidylglycerol--prolipoprotein diacylglyceryl transferase from Nitrosomonas europaea (strain ATCC 19718 / CIP 103999 / KCTC 2705 / NBRC 14298).